We begin with the raw amino-acid sequence, 134 residues long: Complexin-1 (134 aa).

Disordered regions lie at residues 1–60 and 74–114; these read MEFV…AERE and KKEE…EEDE. The span at 15-60 shows a compositional bias: basic and acidic residues; that stretch reads DMGKMLGGDEEKDPDAAKKEEERQEALRQAEEERKAKYAKMEAERE. Positions 29–64 form a coiled coil; the sequence is DAAKKEEERQEALRQAEEERKAKYAKMEAEREVMRQ. The tract at residues 48–70 is interaction with the SNARE complex; sequence RKAKYAKMEAEREVMRQGIRDKY.

Belongs to the complexin/synaphin family. In terms of assembly, binds to the SNARE core complex containing SNAP25, VAMP2 and STX1A. As to expression, nervous system, and pancreatic islet cells. Present in many brain regions, including hippocampus and cerebellum. In the retina, present at conventional amacrine cell synapses (at protein level).

Its subcellular location is the cytoplasm. It localises to the cytosol. The protein localises to the perikaryon. The protein resides in the presynapse. Its function is as follows. Positively regulates a late step in exocytosis of various cytoplasmic vesicles, such as synaptic vesicles and other secretory vesicles. Organizes the SNAREs into a cross-linked zigzag topology that, when interposed between the vesicle and plasma membranes, is incompatible with fusion, thereby preventing SNAREs from releasing neurotransmitters until an action potential arrives at the synapse. Also involved in glucose-induced secretion of insulin by pancreatic beta-cells. Essential for motor behavior. This Mus musculus (Mouse) protein is Complexin-1 (Cplx1).